The following is a 189-amino-acid chain: NADH-ubiquinone oxidoreductase 20.9 kDa subunit (189 aa).

A helical membrane pass occupies residues alanine 73–tyrosine 88.

As to quaternary structure, complex I is composed of about 40 different subunits. In terms of processing, the N-terminus is blocked.

Its subcellular location is the mitochondrion inner membrane. The catalysed reaction is a ubiquinone + NADH + 5 H(+)(in) = a ubiquinol + NAD(+) + 4 H(+)(out). Its function is as follows. Transfer of electrons from NADH to the respiratory chain. The immediate electron acceptor for the enzyme is believed to be ubiquinone. The chain is NADH-ubiquinone oxidoreductase 20.9 kDa subunit (nuo20.9) from Neurospora crassa (strain ATCC 24698 / 74-OR23-1A / CBS 708.71 / DSM 1257 / FGSC 987).